A 396-amino-acid polypeptide reads, in one-letter code: MLDAQTIATVKATIPLLVETGPKLTAHFYDRMFTHNPELKEIFNMSNQRNGDQREALFNAIAAYASNIENLPALLPAVEKIAQKHTSFQIKPEQYNIVGTHLLATLDEMFNPGQEVLDAWGKAYGVLANVFIHREAEIYHENASKDGGWEGTRPFRIVAKTPRSALITSFEFEPVDGGTVAEYRPGQYLGVWLKPEGFAHQEIRQYSLTRKPDGKGYRIAVKREDGGQVSNWLHHHANVGDVVHLAAPAGDFFMNVAADTPVSLISAGVGQTPMLAMLDTLAKEQHTAQVNWFHAAENGDVHAFADEVSELGRTLPRFTAHTWYREPTEADRAQRVFDSEGLMDLSKLEAAISDPAMQFYLCGPVGFMQFAAKQLVSLGVNNENIHYECFGPHKVL.

Residues 1–136 form the Globin domain; sequence MLDAQTIATV…LANVFIHREA (136 aa). H85 provides a ligand contact to heme b. Catalysis depends on charge relay system residues Y95 and E135. Residues 147–396 form a reductase region; it reads GGWEGTRPFR…YECFGPHKVL (250 aa). The 106-residue stretch at 150-255 folds into the FAD-binding FR-type domain; the sequence is EGTRPFRIVA…AAPAGDFFMN (106 aa). FAD is bound by residues Y188 and 204-207; that span reads RQYS. 268 to 273 is an NADP(+) binding site; it reads GVGQTP. An FAD-binding site is contributed by 389–392; the sequence is CFGP.

Belongs to the globin family. Two-domain flavohemoproteins subfamily. The protein in the C-terminal section; belongs to the flavoprotein pyridine nucleotide cytochrome reductase family. The cofactor is heme b. It depends on FAD as a cofactor.

The enzyme catalyses 2 nitric oxide + NADPH + 2 O2 = 2 nitrate + NADP(+) + H(+). It catalyses the reaction 2 nitric oxide + NADH + 2 O2 = 2 nitrate + NAD(+) + H(+). Functionally, is involved in NO detoxification in an aerobic process, termed nitric oxide dioxygenase (NOD) reaction that utilizes O(2) and NAD(P)H to convert NO to nitrate, which protects the bacterium from various noxious nitrogen compounds. Therefore, plays a central role in the inducible response to nitrosative stress. In Salmonella typhi, this protein is Flavohemoprotein.